The sequence spans 601 residues: Elongation factor 4 (601 aa).

One can recognise a tr-type G domain in the interval 6–188 (NRIRNFCIIA…QVVTKIAPPK (183 aa)). Residues 18-23 (DHGKST) and 135-138 (NKID) each bind GTP.

This sequence belongs to the TRAFAC class translation factor GTPase superfamily. Classic translation factor GTPase family. LepA subfamily.

Its subcellular location is the cell membrane. The enzyme catalyses GTP + H2O = GDP + phosphate + H(+). In terms of biological role, required for accurate and efficient protein synthesis under certain stress conditions. May act as a fidelity factor of the translation reaction, by catalyzing a one-codon backward translocation of tRNAs on improperly translocated ribosomes. Back-translocation proceeds from a post-translocation (POST) complex to a pre-translocation (PRE) complex, thus giving elongation factor G a second chance to translocate the tRNAs correctly. Binds to ribosomes in a GTP-dependent manner. This Desulforamulus reducens (strain ATCC BAA-1160 / DSM 100696 / MI-1) (Desulfotomaculum reducens) protein is Elongation factor 4.